A 488-amino-acid polypeptide reads, in one-letter code: 3-octaprenyl-4-hydroxybenzoate carboxy-lyase (488 aa).

N172 serves as a coordination point for Mn(2+). Residues 175–177, 189–191, and 194–195 each bind prenylated FMN; these read IYR, RWL, and RG. Position 238 (E238) interacts with Mn(2+). Residue D287 is the Proton donor of the active site.

It belongs to the UbiD family. In terms of assembly, homohexamer. The cofactor is prenylated FMN. Requires Mn(2+) as cofactor.

It localises to the cell membrane. The enzyme catalyses a 4-hydroxy-3-(all-trans-polyprenyl)benzoate + H(+) = a 2-(all-trans-polyprenyl)phenol + CO2. It functions in the pathway cofactor biosynthesis; ubiquinone biosynthesis. In terms of biological role, catalyzes the decarboxylation of 3-octaprenyl-4-hydroxy benzoate to 2-octaprenylphenol, an intermediate step in ubiquinone biosynthesis. This Legionella pneumophila (strain Corby) protein is 3-octaprenyl-4-hydroxybenzoate carboxy-lyase.